A 76-amino-acid polypeptide reads, in one-letter code: Omega-conotoxin-like TeAr94 (76 aa).

The signal sequence occupies residues 1-22 (MKLTCMMIVAVLFLTAWTFVTA). Residues 23–50 (VPHSSNALENLYLKAHHEMNNPEDSELN) constitute a propeptide that is removed on maturation. Intrachain disulfides connect C53/C67, C60/C71, and C66/C75.

It belongs to the conotoxin O1 superfamily. As to expression, expressed by the venom duct.

Its subcellular location is the secreted. Its function is as follows. Omega-conotoxins act at presynaptic membranes, they bind and block voltage-gated calcium channels. The chain is Omega-conotoxin-like TeAr94 from Conus textile (Cloth-of-gold cone).